Here is a 220-residue protein sequence, read N- to C-terminus: Protein GrpE (220 aa).

The protein belongs to the GrpE family. In terms of assembly, homodimer.

The protein localises to the cytoplasm. Its function is as follows. Participates actively in the response to hyperosmotic and heat shock by preventing the aggregation of stress-denatured proteins, in association with DnaK and GrpE. It is the nucleotide exchange factor for DnaK and may function as a thermosensor. Unfolded proteins bind initially to DnaJ; upon interaction with the DnaJ-bound protein, DnaK hydrolyzes its bound ATP, resulting in the formation of a stable complex. GrpE releases ADP from DnaK; ATP binding to DnaK triggers the release of the substrate protein, thus completing the reaction cycle. Several rounds of ATP-dependent interactions between DnaJ, DnaK and GrpE are required for fully efficient folding. This chain is Protein GrpE, found in Bartonella quintana (strain Toulouse) (Rochalimaea quintana).